Here is a 289-residue protein sequence, read N- to C-terminus: Probable endonuclease 4 (289 aa).

9 residues coordinate Zn(2+): His75, His115, Glu153, Asp187, His190, His224, Asp237, His239, and Glu269.

Belongs to the AP endonuclease 2 family. Zn(2+) serves as cofactor.

It carries out the reaction Endonucleolytic cleavage to 5'-phosphooligonucleotide end-products.. In terms of biological role, endonuclease IV plays a role in DNA repair. It cleaves phosphodiester bonds at apurinic or apyrimidinic (AP) sites, generating a 3'-hydroxyl group and a 5'-terminal sugar phosphate. This chain is Probable endonuclease 4, found in Chlamydia abortus (strain DSM 27085 / S26/3) (Chlamydophila abortus).